We begin with the raw amino-acid sequence, 162 residues long: E3 ubiquitin-protein ligase LAP (162 aa).

The Cytoplasmic segment spans residues 1–78; the sequence is MEGSDNTNTH…RWKCSFMYCN (78 aa). The RING-CH-type zinc finger occupies 3–61; the sequence is GSDNTNTHCWICKDEYNVSTNFCNCKNEFKIVHKNCLEEWINFSHNTKCKICNGKYNIK. Positions 11, 14, 25, 27, 35, 38, 51, and 54 each coordinate Zn(2+). A helical transmembrane segment spans residues 79 to 99; it reads VPAICVSLICLLLLPLTILLV. Over 100–121 the chain is Lumenal; sequence KFNLKSMLENIENRDLIALISA. The chain crosses the membrane as a helical span at residues 122-142; that stretch reads MAYSLPCVVGFITVVHILIAL. At 143-162 the chain is on the cytoplasmic side; sequence YDYYLAAKSDNTTYQVYEYI.

It belongs to the poxviridae LAP protein family.

It localises to the host membrane. The protein localises to the host Golgi apparatus. Its subcellular location is the host trans-Golgi network membrane. The protein resides in the host early endosome membrane. The enzyme catalyses S-ubiquitinyl-[E2 ubiquitin-conjugating enzyme]-L-cysteine + [acceptor protein]-L-lysine = [E2 ubiquitin-conjugating enzyme]-L-cysteine + N(6)-ubiquitinyl-[acceptor protein]-L-lysine.. Functionally, E3 ubiquitin-protein ligase which promotes ubiquitination and subsequent degradation of host MHC-I and CD4 molecules, presumably to prevent lysis of infected cells by cytotoxic T-lymphocytes and NK cell. Binds target molecules through transmembrane interaction. The result of this ubiquitination is the enhancement of the endocytosis of the target chain and the delivery to the lysosome, where it is proteolytically destroyed. This chain is E3 ubiquitin-protein ligase LAP (LW010), found in Lumpy skin disease virus (LSDV).